The following is a 137-amino-acid chain: Glutamate mutase sigma subunit (137 aa).

Positions lysine 3 to glutamate 137 constitute a B12-binding domain. Residues serine 13–alanine 17, histidine 16, serine 61–leucine 63, and asparagine 93–glycine 97 contribute to the adenosylcob(III)alamin site.

Belongs to the methylaspartate mutase GlmS subunit family. Heterotetramer composed of 2 epsilon subunits (GlmE) and 2 sigma subunits (GlmS). GlmE exists as a homodimer and GlmS as a monomer. The cofactor is adenosylcob(III)alamin.

The catalysed reaction is (2S,3S)-3-methyl-L-aspartate = L-glutamate. It functions in the pathway amino-acid degradation; L-glutamate degradation via mesaconate pathway; acetate and pyruvate from L-glutamate: step 1/4. Its activity is regulated as follows. Competitively inhibited by (2S,4S)-4-fluoroglutamate, 2-methyleneglutarate, (2R,3RS)-3-fluoroglutamate and (S)-3-methylitaconate. Functionally, catalyzes the carbon skeleton rearrangement of L-glutamate to L-threo-3-methylaspartate ((2S,3S)-3-methylaspartate). This Clostridium cochlearium protein is Glutamate mutase sigma subunit.